A 432-amino-acid chain; its full sequence is Adenylosuccinate synthetase (432 aa).

GTP-binding positions include Gly-12–Lys-18 and Gly-40–Thr-42. Asp-13 (proton acceptor) is an active-site residue. Asp-13 and Gly-40 together coordinate Mg(2+). IMP contacts are provided by residues Asp-13–Lys-16, Asn-38–His-41, Thr-129, Arg-143, Gln-224, Thr-239, and Arg-303. His-41 functions as the Proton donor in the catalytic mechanism. Val-299 to Arg-305 contributes to the substrate binding site. GTP contacts are provided by residues Arg-305, Lys-331 to Asp-333, and Gly-413 to Gly-415.

This sequence belongs to the adenylosuccinate synthetase family. In terms of assembly, homodimer. It depends on Mg(2+) as a cofactor.

It localises to the cytoplasm. It carries out the reaction IMP + L-aspartate + GTP = N(6)-(1,2-dicarboxyethyl)-AMP + GDP + phosphate + 2 H(+). Its pathway is purine metabolism; AMP biosynthesis via de novo pathway; AMP from IMP: step 1/2. Functionally, plays an important role in the de novo pathway of purine nucleotide biosynthesis. Catalyzes the first committed step in the biosynthesis of AMP from IMP. This chain is Adenylosuccinate synthetase, found in Mycobacterium tuberculosis (strain CDC 1551 / Oshkosh).